Reading from the N-terminus, the 278-residue chain is UPF0276 protein Sama_1305 (278 aa).

Belongs to the UPF0276 family.

This is UPF0276 protein Sama_1305 from Shewanella amazonensis (strain ATCC BAA-1098 / SB2B).